The chain runs to 744 residues: Collagen alpha-1(VIII) chain (744 aa).

A signal peptide spans 1–27 (MAVPPGPPQLLQVLLTISLGSIRLIQA). The nonhelical region (NC2) stretch occupies residues 29–117 (AYYGIKPLPP…GKEIPLASLR (89 aa)). Residues 101–110 (KEAVPKKGKE) show a composition bias toward basic and acidic residues. Disordered regions lie at residues 101 to 435 (KEAV…GLQG) and 478 to 584 (LLGP…QGEY). The segment at 118–571 (GEQGPRGEPG…PGPPGPPGPP (454 aa)) is triple-helical region. Positions 128–137 (PRGPPGPPGL) are enriched in pro residues. Positions 168–190 (KPGAMGMPGAKGEIGPKGEIGPM) are enriched in low complexity. The span at 203–217 (GLPGIGKPGGPGLPG) shows a compositional bias: gly residues. The span at 288–298 (KPGPPGEPGPQ) shows a compositional bias: pro residues. Over residues 328–337 (GFPGGKGEQG) the composition is skewed to gly residues. Residues 389-403 (PGEPGLPGIPGPMGP) show a composition bias toward pro residues. Over residues 411–420 (GPKGEGGIVG) the composition is skewed to gly residues. 2 stretches are compositionally biased toward low complexity: residues 478-506 (LLGP…TGPS) and 540-556 (LHGP…QGQP). The segment covering 558–579 (LPGPPGPPGPPGPPAVMPPTPA) has biased composition (pro residues). The tract at residues 572-744 (AVMPPTPAPQ…SFSGYLLYPM (173 aa)) is nonhelical region (NC1). One can recognise a C1q domain in the interval 611–744 (PAYEMPAFTA…SFSGYLLYPM (134 aa)).

In terms of assembly, homotrimers, or heterotrimers in association with alpha 2(VIII) type collagens. Four homotrimers can form a tetrahedron stabilized by central interacting C-terminal NC1 trimers. In terms of processing, prolines at the third position of the tripeptide repeating unit (G-X-Y) are hydroxylated in some or all of the chains. Proteolytically cleaved by neutrophil elastase, in vitro. Proteolytic processing produces the C-terminal NC1 domain fragment, vastatin.

The protein localises to the secreted. It localises to the extracellular space. The protein resides in the extracellular matrix. It is found in the basement membrane. Macromolecular component of the subendothelium. Major component of the Descemet's membrane (basement membrane) of corneal endothelial cells. Also a component of the endothelia of blood vessels. Necessary for migration and proliferation of vascular smooth muscle cells and thus, has a potential role in the maintenance of vessel wall integrity and structure, in particular in atherogenesis. Functionally, vastatin, the C-terminal fragment comprising the NC1 domain, inhibits aortic endothelial cell proliferation and causes cell apoptosis. The polypeptide is Collagen alpha-1(VIII) chain (COL8A1) (Oryctolagus cuniculus (Rabbit)).